A 70-amino-acid chain; its full sequence is Palustrin-2ISa (70 aa).

Residues 1-22 (MFTLKKSLLLLFFLGTISLSLC) form the signal peptide. A propeptide spans 23–39 (EQERSAEDEGEVIEEEV) (removed in mature form). A disulfide bridge connects residues C64 and C70.

Expressed by the skin glands.

The protein localises to the secreted. In terms of biological role, has antimicrobial activity against Gram-negative bacterium E.coli ATCC 8739 (MIC=100 ug), against Gram positive bacteria S.aureus ATCC 6538 (MIC=25 ug), methicillin-resistant S.aureus ATCC 43300 (MIC=100 ug), B.subtilis ATCC 6633 (MIC=12.5 ug) and against fungus C.albicans ATCC 90028 (MIC=100 ug). This Odorrana ishikawae (Ishikawa's frog) protein is Palustrin-2ISa.